Reading from the N-terminus, the 451-residue chain is Putative metabolite transport protein YyaJ (451 aa).

Residues 1–29 (MNTIFKQKNTHPFSNAANRLDRLPISRVH) lie on the Cytoplasmic side of the membrane. The helical transmembrane segment at 30-50 (FQVLTALGIVYFFDLADLFTL) threads the bilayer. At 51 to 60 (SNVAPALIEH) the chain is on the extracellular side. A helical transmembrane segment spans residues 61-81 (WGIPLSTIANVTAASFLGMFL). Residues 82 to 97 (GASLGGRLSDRIGRKK) are Cytoplasmic-facing. A helical membrane pass occupies residues 98–118 (ALNLFVFVFSIASLCNAAAWD). The Extracellular segment spans residues 119-124 (IPSLMT). A helical membrane pass occupies residues 125–145 (FRFLTGFGVAAAMVITNSYLA). At 146-157 (EFFPSSVRGKYI) the chain is on the cytoplasmic side. Residues 158–178 (SFCAMIGLIGVPITNIVSAFV) form a helical membrane-spanning segment. Topologically, residues 179 to 182 (IPLG) are extracellular. Residues 183–203 (SWGWRLVFVWGAVGLIYFFFI) form a helical membrane-spanning segment. Topologically, residues 204-270 (HRLEESPRWH…LLKGRNLKIT (67 aa)) are cytoplasmic. The helical transmembrane segment at 271–291 (IVLSAVWIFETFGFYGFASWV) threads the bilayer. Residues 292-305 (PSLLKSNGVTMENT) lie on the Extracellular side of the membrane. A helical membrane pass occupies residues 306–326 (LWYNVLHSVGAPLGALLGSMI). Topologically, residues 327-333 (SERFQRK) are cytoplasmic. Residues 334-354 (WILAASAFLTAIAGLLYGMTF) traverse the membrane as a helical segment. Residues 355-357 (IPI) are Extracellular-facing. A helical membrane pass occupies residues 358 to 378 (MIIVFGFIVNITERVFTSNLY). At 379 to 396 (AYTSEPYPTEYRSSGSGL) the chain is on the cytoplasmic side. Residues 397 to 417 (AYGLGRFSNIFGSLLVGFIAV) form a helical membrane-spanning segment. Topologically, residues 418–421 (QLGY) are extracellular. The chain crosses the membrane as a helical span at residues 422 to 442 (ISVFLFIGGCWLACSLLLIFF). Residues 443–451 (GPNTNAKQI) lie on the Cytoplasmic side of the membrane.

This sequence belongs to the major facilitator superfamily. Sugar transporter (TC 2.A.1.1) family.

The protein localises to the cell membrane. This is Putative metabolite transport protein YyaJ (yyaJ) from Bacillus subtilis (strain 168).